The following is a 173-amino-acid chain: CASP-like protein 3A1 (173 aa).

A topological domain (cytoplasmic) is located at residue Met-1. The helical transmembrane segment at Val-2–Phe-22 threads the bilayer. Topologically, residues Thr-23–Pro-48 are extracellular. The N-linked (GlcNAc...) asparagine glycan is linked to Asn-44. The chain crosses the membrane as a helical span at residues Phe-49–Tyr-69. Residues Gln-70–Cys-84 lie on the Cytoplasmic side of the membrane. A helical transmembrane segment spans residues Ile-85–Ala-105. Residues Ala-106 to Arg-140 are Extracellular-facing. N-linked (GlcNAc...) asparagine glycosylation is present at Asn-113. A helical membrane pass occupies residues Ala-141–Leu-161. At Asp-162–Gly-173 the chain is on the cytoplasmic side.

It belongs to the Casparian strip membrane proteins (CASP) family. Homodimer and heterodimers.

It localises to the cell membrane. The polypeptide is CASP-like protein 3A1 (Pteridium aquilinum subsp. aquilinum (Bracken fern)).